The primary structure comprises 177 residues: MCTSRQIIGSLLVLSVLEIGLGLSSVAVGAVTFFRVRMEQKPQLGDSSPVWSGACFLICGVCGIFCAKKKSGLIMILFSACCICGLIGGILNIQFLRALNKRSSSLYSLYLASMSLACIGISGCTISTWLTCRLASYEQRRMFLEREHSLHHSHEMTEKDTENITNGGGPLALNGRV.

The next 4 helical transmembrane spans lie at 11-31 (LLVLSVLEIGLGLSSVAVGAV), 47-67 (SSPVWSGACFLICGVCGIFCA), 73-93 (LIMILFSACCICGLIGGILNI), and 106-126 (LYSLYLASMSLACIGISGCTI). Over residues 152–162 (HSHEMTEKDTE) the composition is skewed to basic and acidic residues. The tract at residues 152–177 (HSHEMTEKDTENITNGGGPLALNGRV) is disordered.

Its subcellular location is the cytoplasm. It localises to the membrane. The polypeptide is Transmembrane protein 196 (tmem196) (Xenopus tropicalis (Western clawed frog)).